The sequence spans 1030 residues: Pro-apoptotic serine protease NMA111 (1030 aa).

A disordered region spans residues 1–48; the sequence is MNGTTSPIAARSKRKEPPHTVDGRHPKHHRTNGEVAPAADNTPDNQDE. The span at 15 to 24 shows a compositional bias: basic and acidic residues; it reads KEPPHTVDGR. Positions 89–279 are serine protease; sequence VVSIRFCQTC…LPLDRPLRAL (191 aa). Active-site charge relay system residues include His127, Asp158, and Ser240. PDZ domains lie at 312 to 384 and 880 to 960; these read PEWE…LRGG and AVSF…LRAM.

This sequence belongs to the peptidase S1C family.

It is found in the nucleus. Its function is as follows. Nuclear serine protease which mediates apoptosis. This chain is Pro-apoptotic serine protease NMA111 (NMA111), found in Chaetomium globosum (strain ATCC 6205 / CBS 148.51 / DSM 1962 / NBRC 6347 / NRRL 1970) (Soil fungus).